A 177-amino-acid chain; its full sequence is NAD(P)H-quinone oxidoreductase subunit 6, chloroplastic (177 aa).

5 helical membrane passes run 10–30 (VLLV…VLLT), 32–52 (PIYS…FYIL), 61–81 (AQLL…VMFM), 90–112 (FYLW…FSLI), and 152–172 (FYLP…GAIT).

Belongs to the complex I subunit 6 family. NDH is composed of at least 16 different subunits, 5 of which are encoded in the nucleus.

The protein localises to the plastid. It is found in the chloroplast thylakoid membrane. It catalyses the reaction a plastoquinone + NADH + (n+1) H(+)(in) = a plastoquinol + NAD(+) + n H(+)(out). The catalysed reaction is a plastoquinone + NADPH + (n+1) H(+)(in) = a plastoquinol + NADP(+) + n H(+)(out). NDH shuttles electrons from NAD(P)H:plastoquinone, via FMN and iron-sulfur (Fe-S) centers, to quinones in the photosynthetic chain and possibly in a chloroplast respiratory chain. The immediate electron acceptor for the enzyme in this species is believed to be plastoquinone. Couples the redox reaction to proton translocation, and thus conserves the redox energy in a proton gradient. The chain is NAD(P)H-quinone oxidoreductase subunit 6, chloroplastic (ndhG) from Acorus calamus var. americanus (American sweet flag).